Reading from the N-terminus, the 2212-residue chain is Nonribosomal peptide synthetase ftmPS (2212 aa).

Residues 74–473 (TYAELDSLSD…IEHHLQQTLP (400 aa)) are adenylation 1. In terms of domain architecture, Carrier 1 spans 592–669 (PPSTLKETTI…EQSQRAGLIQ (78 aa)). Residue S629 is modified to O-(pantetheine 4'-phosphoryl)serine. A condensation 1 region spans residues 708–973 (EDIYPCTALQ…IATVPLRIRV (266 aa)). The segment at 1167-1564 (TYRELWAHSS…LSAVEASLMR (398 aa)) is adenylation 2. In terms of domain architecture, Carrier 2 spans 1678-1757 (PMSDDNERRL…QFRHLITEDD (80 aa)). S1715 is modified (O-(pantetheine 4'-phosphoryl)serine). The interval 1815–2070 (HFQFDLSGAI…CTNYIPYRLS (256 aa)) is condensation 2.

This sequence belongs to the NRP synthetase family.

It catalyses the reaction L-proline + L-tryptophan + 2 ATP = brevianamide F + 2 AMP + 2 diphosphate + 2 H(+). It functions in the pathway mycotoxin biosynthesis. Its function is as follows. Nonribosomal peptide synthetase; part of the gene cluster that mediates the biosynthesis of fumitremorgins, indole alkaloids that carry not only intriguing chemical structures, but also interesting biological and pharmacological activities. The biosynthesis of fumitremorgin-type alkaloids begins by condensation of the two amino acids L-tryptophan and L-proline to brevianamide F, catalyzed by the non-ribosomal peptide synthetase ftmPS/ftmA. Brevianamide F is then prenylated by the prenyltransferase ftmPT1/ftmB in the presence of dimethylallyl diphosphate, resulting in the formation of tryprostatin B. The three cytochrome P450 monooxygenases, ftmP450-1/ftmC, ftmP450-2/ftmE and ftmP450-3/FtmG, are responsible for the conversion of tryprostatin B to 6-hydroxytryprostatin B, tryprostatin A to fumitremorgin C and fumitremorgin C to 12,13-dihydroxyfumitremorgin C, respectively. The putative methyltransferase ftmMT/ftmD is expected for the conversion of 6-hydroxytryprostatin B to tryprostatin A. FtmPT2/FtmH catalyzes the prenylation of 12,13-dihydroxyfumitre-morgin C in the presence of dimethylallyl diphosphate, resulting in the formation of fumitremorgin B. Fumitremorgin B is further converted to verruculogen by ftmOx1/ftmF via the insertion of an endoperoxide bond between the two prenyl moieties. Finally, verruculogen is further converted to fumitremorgin A by the verruculogen prenyltransferase ftmPT3. The polypeptide is Nonribosomal peptide synthetase ftmPS (ftmPS) (Neosartorya fischeri (strain ATCC 1020 / DSM 3700 / CBS 544.65 / FGSC A1164 / JCM 1740 / NRRL 181 / WB 181) (Aspergillus fischerianus)).